Consider the following 461-residue polypeptide: Protein naked cuticle homolog 2 (461 aa).

Residues 1–106 are disordered; it reads MGKFQSKHAA…DGEKAASREG (106 aa). The N-myristoyl glycine moiety is linked to residue Gly-2. 2 stretches are compositionally biased toward basic and acidic residues: residues 34 to 73 and 97 to 106; these read RGAEETDRRAGSGVEHRSRDKQELLNGDPKEGPFWDDKGS and DGEKAASREG. Residues 121 to 186 are interaction with DVL1, DVL2 and DVL3; that stretch reads QCDVSVEEDN…LRVKLTVSPE (66 aa). One can recognise an EF-hand domain in the interval 127 to 162; it reads EEDNRQEWTFTLYDFDNSGKVTREDMSSLMHTIYEV. Asp-140, Asp-142, Ser-144, Lys-146, and Asp-151 together coordinate Ca(2+). 5 disordered regions span residues 176–205, 263–302, 321–359, 372–414, and 441–461; these read TLRVKLTVSPEPSSKKECPLTGQDREPTRG, YTSKFGPGSPPEQARQEHHGRATHIPSRSRSQESDAHAIH, TRALAAQPRIKGQEKQFLRSPKGPGKPLGTPGSGKPGKA, SAQD…GQPT, and HEHHHHHEHHHHHHHHHFHPS. Basic and acidic residues predominate over residues 188–205; the sequence is SSKKECPLTGQDREPTRG. Positions 307–396 are interaction with TGFA; sequence QVLAEHVIPA…PPQPYGHKRY (90 aa). Residues 341-350 are compositionally biased toward low complexity; the sequence is PKGPGKPLGT. Positions 380–390 are enriched in pro residues; sequence PQPPPQPPPQP.

It belongs to the NKD family. As to quaternary structure, interacts with RNF25, TGFA (via cytoplasmic domain), and PPP2R3A. Interacts with DVL1, DVL2 and DVL3. In terms of processing, ubiquitinated, leading to rapid proteasomal degradation. Interaction with TGFA interferes with RNF25 binding and protects against ubiquitination mediated by RNF25. As to expression, expressed in the cecum, colon, esophagus, ileum, jejunum, skin and stomach.

It localises to the cell membrane. It is found in the cytoplasm. The protein localises to the cytoplasmic vesicle. Functionally, cell autonomous antagonist of the canonical Wnt signaling pathway. May activate a second Wnt signaling pathway that controls planar cell polarity. Required for processing of TGFA and for targeting of TGFA to the basolateral membrane of polarized epithelial cells. The protein is Protein naked cuticle homolog 2 (Nkd2) of Mus musculus (Mouse).